A 164-amino-acid chain; its full sequence is UPF0114 protein YqhA (164 aa).

3 helical membrane-spanning segments follow: residues 15–35 (LLAPVYFGLSLALVALALKFF), 53–73 (LILVLLSLVDMTLVGGLLVMV), and 136–156 (LMWYVIIHLTFVLSAFVMGYL).

It belongs to the UPF0114 family.

It is found in the cell membrane. The polypeptide is UPF0114 protein YqhA (Shigella dysenteriae serotype 1 (strain Sd197)).